Reading from the N-terminus, the 985-residue chain is Rho guanine nucleotide exchange factor 2 (985 aa).

The segment at 1–32 is disordered; it reads MSRIESLTRARIDRSKEQATKTREKEKMKEAK. The Phorbol-ester/DAG-type zinc finger occupies 39–86; that stretch reads GHLFTTISVSGMTMCYACNKSITAKEALICPTCNVTIHNRCKDTLANC. Phosphoserine occurs at positions 109, 122, 129, 133, and 137. Residues 131 to 161 are interaction with DYNLT1; sequence RQSLLGSRRGLSSLSLAKSVSTTNIAGHFND. The residue at position 143 (Ser143) is a Phosphoserine; by PAK4. Ser151, Ser163, Ser172, Ser174, and Ser177 each carry phosphoserine. Residues 236–433 form the DH domain; sequence KKQDVIYELI…KELLSNVDQD (198 aa). An N6-acetyllysine modification is found at Lys354. Positions 473–572 constitute a PH domain; the sequence is KLIHEGCLLW…WIRVIQQSVR (100 aa). A coiled-coil region spans residues 591 to 619; sequence LRRIKTKLQQKNQALVELLQKNVELFAEM. A phosphoserine mark is found at Ser646 and Ser649. Residue Thr680 is modified to Phosphothreonine; by MAPK1 or MAPK3. Phosphoserine is present on residues Ser692, Ser710, and Ser781. Thr795 bears the Phosphothreonine mark. A coiled-coil region spans residues 797 to 866; it reads EKQATELALL…RQLAALGQNE (70 aa). Ser885 bears the Phosphoserine mark. Disordered stretches follow at residues 890–909 and 918–985; these read DALY…DRLD and HRPF…ASES. Position 893 is a phosphotyrosine (Tyr893). Ser895 is modified (phosphoserine; by PAK4). Over residues 919-938 the composition is skewed to basic and acidic residues; that stretch reads RPFDDREAQELGSPEDRLQD. A phosphoserine mark is found at Ser931, Ser939, and Ser940. Residues 940–949 are compositionally biased toward acidic residues; sequence SDPDTGSEEE. Thr944 is subject to Phosphothreonine. 5 positions are modified to phosphoserine: Ser946, Ser951, Ser952, Ser955, and Ser959.

In terms of assembly, found in a complex composed at least of ARHGEF2, NOD2 and RIPK2. Interacts with RIPK2; the interaction mediates tyrosine phosphorylation of RIPK2 by Src kinase CSK. Interacts with RIPK1 and RIPK3. Interacts with YWHAZ/14-3-3 zeta; when phosphorylated at Ser-885. Interacts with the kinases PAK4, AURKA and MAPK1. Interacts with RHOA and RAC1. Interacts with NOD1. Interacts (via the N- terminal zinc finger) with CAPN6 (via domain II). Interacts with DYNLT1. Post-translationally, phosphorylation of Ser-885 by PAK1 induces binding to protein YWHAZ, promoting its relocation to microtubules and the inhibition of its activity. Phosphorylated by AURKA and CDK1 during mitosis, which negatively regulates its activity. Phosphorylation by MAPK1 or MAPK3 increases nucleotide exchange activity. Phosphorylation by PAK4 releases GEF-H1 from the microtubules. Phosphorylated on serine, threonine and tyrosine residues in a RIPK2-dependent manner. As to expression, ubiquitous, with the exception of liver tissue. Levels are high in hemopoietic tissues (thymus, spleen, bone marrow) as well as in kidney and lung. Expressed in the germinal zones of both the neocortex and the cerebellum and in the pontine gray nuclei.

It localises to the cytoplasm. The protein resides in the cytoskeleton. Its subcellular location is the cell junction. It is found in the tight junction. The protein localises to the golgi apparatus. It localises to the spindle. The protein resides in the cytoplasmic vesicle. Functionally, activates Rho-GTPases by promoting the exchange of GDP for GTP. May be involved in epithelial barrier permeability, cell motility and polarization, dendritic spine morphology, antigen presentation, leukemic cell differentiation, cell cycle regulation, innate immune response, and cancer. Binds Rac-GTPases, but does not seem to promote nucleotide exchange activity toward Rac-GTPases. May stimulate instead the cortical activity of Rac. Inactive toward CDC42, TC10, or Ras-GTPases. Forms an intracellular sensing system along with NOD1 for the detection of microbial effectors during cell invasion by pathogens. Involved in innate immune signaling transduction pathway promoting cytokine IL6/interleukin-6 and TNF-alpha secretion in macrophage upon stimulation by bacterial peptidoglycans; acts as a signaling intermediate between NOD2 receptor and RIPK2 kinase. Contributes to the tyrosine phosphorylation of RIPK2 through Src tyrosine kinase leading to NF-kappaB activation by NOD2. Overexpression activates Rho-, but not Rac-GTPases, and increases paracellular permeability. Involved in neuronal progenitor cell division and differentiation. Involved in the migration of precerebellar neurons. In Mus musculus (Mouse), this protein is Rho guanine nucleotide exchange factor 2 (Arhgef2).